The primary structure comprises 373 residues: tRNA-specific 2-thiouridylase MnmA (373 aa).

Residues 12–19 (GMSGGVDS) and Met-38 contribute to the ATP site. The interval 98–100 (NPD) is interaction with target base in tRNA. The active-site Nucleophile is the Cys-103. An intrachain disulfide couples Cys-103 to Cys-200. Gly-127 provides a ligand contact to ATP. The interval 150-152 (KDQ) is interaction with tRNA. Residue Cys-200 is the Cysteine persulfide intermediate of the active site. The segment at 312–313 (RY) is interaction with tRNA.

The protein belongs to the MnmA/TRMU family.

Its subcellular location is the cytoplasm. It catalyses the reaction S-sulfanyl-L-cysteinyl-[protein] + uridine(34) in tRNA + AH2 + ATP = 2-thiouridine(34) in tRNA + L-cysteinyl-[protein] + A + AMP + diphosphate + H(+). Its function is as follows. Catalyzes the 2-thiolation of uridine at the wobble position (U34) of tRNA, leading to the formation of s(2)U34. In Streptococcus pneumoniae (strain ATCC BAA-255 / R6), this protein is tRNA-specific 2-thiouridylase MnmA.